A 309-amino-acid chain; its full sequence is L-aminoadipate-semialdehyde dehydrogenase-phosphopantetheinyl transferase (309 aa).

CoA-binding positions include Arg-47, 86-91 (RTSKGK), and 108-111 (NISH). Mg(2+) is bound by residues Asp-129 and Glu-181. 181-185 (ESFIK) contacts CoA.

The protein belongs to the P-Pant transferase superfamily. AcpS family. In terms of assembly, monomer. Mg(2+) serves as cofactor.

It localises to the cytoplasm. The protein localises to the cytosol. The catalysed reaction is apo-[ACP] + CoA = holo-[ACP] + adenosine 3',5'-bisphosphate + H(+). It catalyses the reaction apo-[ACP] + acetyl-CoA = acetyl-[ACP] + adenosine 3',5'-bisphosphate + H(+). In terms of biological role, catalyzes the post-translational modification of target proteins by phosphopantetheine. Can transfer the 4'-phosphopantetheine moiety from coenzyme A, regardless of whether the CoA is presented in the free thiol form or as an acetyl thioester, to a serine residue of a broad range of acceptors including the acyl carrier domain of FASN. The sequence is that of L-aminoadipate-semialdehyde dehydrogenase-phosphopantetheinyl transferase (Aasdhppt) from Rattus norvegicus (Rat).